The following is a 218-amino-acid chain: Cytochrome b6 (218 aa).

A helical membrane pass occupies residues 35 to 55 (IFYCLGGITLVCFLIQFATGF). C38 is a heme c binding site. Heme b-binding residues include H89 and H103. A run of 3 helical transmembrane segments spans residues 93–113 (ASMM…TGGF), 119–139 (LTWV…VTGY), and 189–209 (LHTF…FLMI). 2 residues coordinate heme b: H190 and H205.

This sequence belongs to the cytochrome b family. PetB subfamily. In terms of assembly, the 4 large subunits of the cytochrome b6-f complex are cytochrome b6, subunit IV (17 kDa polypeptide, PetD), cytochrome f and the Rieske protein, while the 4 small subunits are PetG, PetL, PetM and PetN. The complex functions as a dimer. It depends on heme b as a cofactor. Heme c is required as a cofactor.

Its subcellular location is the cellular thylakoid membrane. Component of the cytochrome b6-f complex, which mediates electron transfer between photosystem II (PSII) and photosystem I (PSI), cyclic electron flow around PSI, and state transitions. This is Cytochrome b6 from Synechococcus sp. (strain WH7803).